A 458-amino-acid polypeptide reads, in one-letter code: Flavohemoprotein (458 aa).

Residues 2 to 158 (TLSEDTLRAV…LADLFIKREE (157 aa)) form the Globin domain. H107 contributes to the heme b binding site. Catalysis depends on charge relay system residues Y117 and E157. Positions 169-457 (GGWRQTRTFR…FEMFGPFKAS (289 aa)) are reductase. Positions 172–279 (RQTRTFRVEE…APPYGDFFLR (108 aa)) constitute an FAD-binding FR-type domain. Residues Y211 and 228-231 (RQYS) each bind FAD. Residue 321–326 (GIGQTP) coordinates NADP(+). An FAD-binding site is contributed by 450 to 453 (MFGP).

This sequence belongs to the globin family. Two-domain flavohemoproteins subfamily. The protein in the C-terminal section; belongs to the flavoprotein pyridine nucleotide cytochrome reductase family. Monomer. Requires heme b as cofactor. It depends on FAD as a cofactor.

It catalyses the reaction 2 nitric oxide + NADPH + 2 O2 = 2 nitrate + NADP(+) + H(+). It carries out the reaction 2 nitric oxide + NADH + 2 O2 = 2 nitrate + NAD(+) + H(+). Flavohemoprotein involved in nitric oxide (NO) detoxification in an aerobic process, termed nitric oxide dioxygenase (NOD) reaction that utilizes O(2) and NAD(P)H to convert NO to nitrate, which protects the protozoan parasite from various noxious nitrogen compounds. Therefore, plays a central role in the inducible response to nitrosative stress. May also be involved in O(2) detoxification. This Giardia intestinalis (strain ATCC 50803 / WB clone C6) (Giardia lamblia) protein is Flavohemoprotein (hmpA).